The chain runs to 448 residues: UDP-N-acetylmuramoylalanine--D-glutamate ligase (448 aa).

ATP is bound at residue 112-118 (GSNAKST).

It belongs to the MurCDEF family.

Its subcellular location is the cytoplasm. It carries out the reaction UDP-N-acetyl-alpha-D-muramoyl-L-alanine + D-glutamate + ATP = UDP-N-acetyl-alpha-D-muramoyl-L-alanyl-D-glutamate + ADP + phosphate + H(+). It participates in cell wall biogenesis; peptidoglycan biosynthesis. Its function is as follows. Cell wall formation. Catalyzes the addition of glutamate to the nucleotide precursor UDP-N-acetylmuramoyl-L-alanine (UMA). In Acinetobacter baumannii (strain AB307-0294), this protein is UDP-N-acetylmuramoylalanine--D-glutamate ligase.